Consider the following 218-residue polypeptide: Elongation factor Ts (218 aa).

The segment at 82-85 (TDFV) is involved in Mg(2+) ion dislocation from EF-Tu.

It belongs to the EF-Ts family.

It is found in the cytoplasm. In terms of biological role, associates with the EF-Tu.GDP complex and induces the exchange of GDP to GTP. It remains bound to the aminoacyl-tRNA.EF-Tu.GTP complex up to the GTP hydrolysis stage on the ribosome. This chain is Elongation factor Ts, found in Prochlorococcus marinus (strain MIT 9303).